The sequence spans 258 residues: Type III pantothenate kinase (258 aa).

7–14 contributes to the ATP binding site; the sequence is DVGNTRLK. Residues Y96 and 103-106 contribute to the substrate site; that span reads GADR. D105 functions as the Proton acceptor in the catalytic mechanism. T133 contacts ATP. Position 183 (T183) interacts with substrate.

This sequence belongs to the type III pantothenate kinase family. Homodimer. It depends on NH4(+) as a cofactor. The cofactor is K(+).

Its subcellular location is the cytoplasm. The enzyme catalyses (R)-pantothenate + ATP = (R)-4'-phosphopantothenate + ADP + H(+). It participates in cofactor biosynthesis; coenzyme A biosynthesis; CoA from (R)-pantothenate: step 1/5. In terms of biological role, catalyzes the phosphorylation of pantothenate (Pan), the first step in CoA biosynthesis. The polypeptide is Type III pantothenate kinase (Acidovorax ebreus (strain TPSY) (Diaphorobacter sp. (strain TPSY))).